The primary structure comprises 602 residues: Glutamyl-tRNA(Gln) amidotransferase subunit B, mitochondrial (602 aa).

It belongs to the GatB/GatE family. GatB subfamily. As to quaternary structure, subunit of the heterotrimeric GatCAB amidotransferase (AdT) complex, composed of A, B and C subunits.

The protein localises to the mitochondrion. The enzyme catalyses L-glutamyl-tRNA(Gln) + L-glutamine + ATP + H2O = L-glutaminyl-tRNA(Gln) + L-glutamate + ADP + phosphate + H(+). In terms of biological role, allows the formation of correctly charged Gln-tRNA(Gln) through the transamidation of misacylated Glu-tRNA(Gln) in the mitochondria. The reaction takes place in the presence of glutamine and ATP through an activated gamma-phospho-Glu-tRNA(Gln). The sequence is that of Glutamyl-tRNA(Gln) amidotransferase subunit B, mitochondrial from Paracoccidioides lutzii (strain ATCC MYA-826 / Pb01) (Paracoccidioides brasiliensis).